A 137-amino-acid chain; its full sequence is Nucleoside diphosphate kinase (137 aa).

ATP is bound by residues Lys9, Phe57, Arg85, Thr91, Arg102, and Asn112. His115 (pros-phosphohistidine intermediate) is an active-site residue.

This sequence belongs to the NDK family. As to quaternary structure, homotetramer. Requires Mg(2+) as cofactor.

It localises to the cytoplasm. It carries out the reaction a 2'-deoxyribonucleoside 5'-diphosphate + ATP = a 2'-deoxyribonucleoside 5'-triphosphate + ADP. It catalyses the reaction a ribonucleoside 5'-diphosphate + ATP = a ribonucleoside 5'-triphosphate + ADP. Functionally, major role in the synthesis of nucleoside triphosphates other than ATP. The ATP gamma phosphate is transferred to the NDP beta phosphate via a ping-pong mechanism, using a phosphorylated active-site intermediate. The chain is Nucleoside diphosphate kinase from Leptospira interrogans serogroup Icterohaemorrhagiae serovar Lai (strain 56601).